The sequence spans 429 residues: Homocysteine synthase (429 aa).

Lys210 is subject to N6-(pyridoxal phosphate)lysine.

It belongs to the trans-sulfuration enzymes family. In terms of assembly, homotetramer. It depends on pyridoxal 5'-phosphate as a cofactor.

It localises to the cytoplasm. The protein localises to the nucleus. It catalyses the reaction O-acetyl-L-homoserine + methanethiol = L-methionine + acetate + H(+). The enzyme catalyses O-acetyl-L-homoserine + hydrogen sulfide = L-homocysteine + acetate. Its pathway is amino-acid biosynthesis; L-methionine biosynthesis via de novo pathway; L-homocysteine from O-acetyl-L-homoserine. Catalyzes the conversion of O-acetyl-L-homoserine (OAH) into homocysteine in the methionine biosynthesis pathway. Can also use O-succinyl-L-homoserine and L-homoserine as substrates. Also has cysteine synthase (O-acetylserine sulfhydrylase) activity in vitro, but in S.pombe, it seems only to be involved in the alternative pathway of methionine biosynthesis under cysteine deficiency conditions. In Schizosaccharomyces pombe (strain 972 / ATCC 24843) (Fission yeast), this protein is Homocysteine synthase.